Consider the following 305-residue polypeptide: uncharacterized protein (305 aa).

Residues 53-185 are disordered; the sequence is SGRIGDGDDG…TGPRSSRTVG (133 aa). 2 stretches are compositionally biased toward basic and acidic residues: residues 95 to 116 and 128 to 142; these read VEER…ERPT and GSER…RSEG. Positions 161-171 are enriched in polar residues; sequence GNTQAPSQSAE. The RING-type; atypical zinc finger occupies 260 to 302; that stretch reads CAICMSNFIKNQRLRVLPCDHRFHVGCVDKWLLGHSNKCPVCR.

This is an uncharacterized protein from Encephalitozoon cuniculi (strain GB-M1) (Microsporidian parasite).